We begin with the raw amino-acid sequence, 748 residues long: Ribonucleoprotein PTB-binding 1 (748 aa).

Residues 1 to 42 are disordered; sequence MAADVSVTHRPPLSPEAEAEAETPETVDRRTPEQELPPLDPE. N-acetylalanine is present on alanine 2. A phosphoserine mark is found at serine 6 and serine 14. A Phosphothreonine modification is found at threonine 31. The short motif at 45–60 is the Nuclear localization signal element; sequence RKRLEHTERQFRNRRK. RRM domains are found at residues 59-130, 132-210, and 221-299; these read RKIL…LQPT, ALLC…WTDA, and RCLC…FCAP. Residues 307–401 are interaction with PTBP1; sequence LAALIAAQAT…QSQSQKKPGI (95 aa). Disordered regions lie at residues 390-505, 525-647, and 672-731; these read QSQS…GEPP, SNLA…PLSH, and KAVG…QHSQ. Position 469 is a phosphothreonine (threonine 469). Phosphoserine is present on residues serine 480, serine 576, serine 626, and serine 630. The span at 675-685 shows a compositional bias: low complexity; it reads GSSPMGSSEGL. Residues serine 716 and serine 720 each carry the phosphoserine modification. Residues 743–746 carry the Nuclear localization signal motif; the sequence is KRKR.

In terms of assembly, interacts with PTBP1, RAVER2, VCL and ACTN1. Part of a complex containing RAVER1, VCL and ACTN1. Ubiquitous. Detected in aorta, brain, gut, heart, kidney, liver, spleen, uterus and skeletal muscle.

Its subcellular location is the nucleus. The protein resides in the cytoplasm. Its function is as follows. Cooperates with PTBP1 to modulate regulated alternative splicing events. Promotes exon skipping. Cooperates with PTBP1 to modulate switching between mutually exclusive exons during maturation of the TPM1 pre-mRNA. The chain is Ribonucleoprotein PTB-binding 1 (Raver1) from Rattus norvegicus (Rat).